We begin with the raw amino-acid sequence, 130 residues long: Small ribosomal subunit protein uS8 (130 aa).

The protein belongs to the universal ribosomal protein uS8 family. As to quaternary structure, part of the 30S ribosomal subunit.

In terms of biological role, one of the primary rRNA binding proteins, it binds directly to 16S rRNA central domain where it helps coordinate assembly of the platform of the 30S subunit. This Pyrobaculum islandicum (strain DSM 4184 / JCM 9189 / GEO3) protein is Small ribosomal subunit protein uS8.